Here is a 251-residue protein sequence, read N- to C-terminus: HTH-type transcriptional regulator UlaR (251 aa).

Positions 3 to 58 (EAQRHQILLDMLAQLGFVTVENVIERLGISPATARRDINKLDESGKLKKVRNGAEA) constitute an HTH deoR-type domain. Residues 20–39 (VTVENVIERLGISPATARRD) constitute a DNA-binding region (H-T-H motif).

It is found in the cytoplasm. Functionally, represses ulaG and the ulaABCDEF operon. The sequence is that of HTH-type transcriptional regulator UlaR from Salmonella arizonae (strain ATCC BAA-731 / CDC346-86 / RSK2980).